Reading from the N-terminus, the 93-residue chain is Small ribosomal subunit protein uS19 (93 aa).

It belongs to the universal ribosomal protein uS19 family.

Functionally, protein S19 forms a complex with S13 that binds strongly to the 16S ribosomal RNA. This is Small ribosomal subunit protein uS19 from Geobacter metallireducens (strain ATCC 53774 / DSM 7210 / GS-15).